The primary structure comprises 656 residues: MNDVSQKAEILLSSSKPVPKSYVPKLGKGDVKDKFEAMQRAREERNQRRSRDEKQRRKEQYIREREWNRRKQEIKDMLASDEEEEPSKVEKAYVPKLTGTVKGKFDEMEKHRQEEQRKRTEEERKRRIEQDLLEKRKMQRELAKRAEQEGDDSLLITVVPAKSYRAAANRKDPEDLDREHRNGRVSQEEEKTRHEEECRALKEAKCLSLVMDDETEAKKESRFPGKLKSTFEELERQRQENRKKQAEEEARRRLEEERRAFEEARRNMVNEEDESQDTETVFKEYRPGKLRLSFEEIERQRREEEKRKAEEEARRRMEEEKKAFAEARRSMVLDDDSPEIYKAVSQESLTPGKLEINFEQLLRQKMEEERRRTEEERRQKLEMEKQEFEQLRQEMGKEEEENESFGLSREYEELIKLKRSGSIQAKNLKSKFEKIGQLSEKEVQKKIEEERAKRRAIDLEIKEREAENFHEDDDVDVKPAKKSESPFTHKVNMKARFEQMAKARQEEEQRRIEEQKLLRMQFEQKEIDAALQKKREDDEEEEGSIVNGSTTEDEEQTRSGAPWFKKPLRNTSVVDSEPVRFTVKVTGEPKPEVTWWFEGELLQDGEDYQYIERGETYCLYLPETFPEDGGEYMCKAVNSKGSAASTCILTIEMDDY.

Disordered stretches follow at residues 1–131, 165–198, and 215–284; these read MNDV…IEQD, RAAA…EEEC, and TEAK…VFKE. Over residues 11 to 26 the composition is skewed to low complexity; it reads LLSSSKPVPKSYVPKL. The segment covering 27–78 has biased composition (basic and acidic residues); sequence GKGDVKDKFEAMQRAREERNQRRSRDEKQRRKEQYIREREWNRRKQEIKDML. Serine 80 is subject to Phosphoserine. Composition is skewed to basic and acidic residues over residues 103–131, 169–198, and 216–269; these read GKFD…IEQD, NRKD…EEEC, and EAKK…RNMV. Phosphoserine occurs at positions 221, 330, 337, and 345. A Phosphothreonine modification is found at threonine 350. Disordered regions lie at residues 468-492 and 529-564; these read NFHE…HKVN and AALQ…APWF. Residues serine 544 and serine 549 each carry the phosphoserine modification. Residue threonine 551 is modified to Phosphothreonine. In terms of domain architecture, Ig-like spans 562–650; sequence PWFKKPLRNT…GSAASTCILT (89 aa).

In terms of assembly, interacts with F-actin. As to expression, expressed in brain, testis, spleen and fibroblasts (at protein level). Not detected in liver, kidney or epithelial cells (at protein level).

The protein resides in the cytoplasm. It localises to the cytoskeleton. Its subcellular location is the cell junction. The protein localises to the adherens junction. It is found in the myofibril. The protein resides in the sarcomere. It localises to the z line. In terms of biological role, involved in regulating cell migration through association with the actin cytoskeleton. Has an essential role in the maintenance of Z line and sarcomere integrity. The polypeptide is Nexilin (Rattus norvegicus (Rat)).